Reading from the N-terminus, the 127-residue chain is MRHRKSGRQLNRNSSHRQAMFRNMAGSLVRHEIIKTTLPKAKELRRVVEPLITLAKTDSVANRRLAFARTRDNEIVAKLFNELGPRFASRAGGYTRILKCGFRAGDNAPMAYIELVDRSEKAEAAAE.

This sequence belongs to the bacterial ribosomal protein bL17 family. As to quaternary structure, part of the 50S ribosomal subunit. Contacts protein L32.

The sequence is that of Large ribosomal subunit protein bL17 from Escherichia fergusonii (strain ATCC 35469 / DSM 13698 / CCUG 18766 / IAM 14443 / JCM 21226 / LMG 7866 / NBRC 102419 / NCTC 12128 / CDC 0568-73).